The following is an 89-amino-acid chain: Small ribosomal subunit protein uS14 (89 aa).

The protein belongs to the universal ribosomal protein uS14 family. As to quaternary structure, part of the 30S ribosomal subunit. Contacts proteins S3 and S10.

Binds 16S rRNA, required for the assembly of 30S particles and may also be responsible for determining the conformation of the 16S rRNA at the A site. This is Small ribosomal subunit protein uS14 from Flavobacterium johnsoniae (strain ATCC 17061 / DSM 2064 / JCM 8514 / BCRC 14874 / CCUG 350202 / NBRC 14942 / NCIMB 11054 / UW101) (Cytophaga johnsonae).